Consider the following 182-residue polypeptide: Adenine phosphoribosyltransferase (182 aa).

This sequence belongs to the purine/pyrimidine phosphoribosyltransferase family. As to quaternary structure, homodimer.

The protein resides in the cytoplasm. It carries out the reaction AMP + diphosphate = 5-phospho-alpha-D-ribose 1-diphosphate + adenine. Its pathway is purine metabolism; AMP biosynthesis via salvage pathway; AMP from adenine: step 1/1. Its function is as follows. Catalyzes a salvage reaction resulting in the formation of AMP, that is energically less costly than de novo synthesis. This chain is Adenine phosphoribosyltransferase, found in Campylobacter jejuni subsp. doylei (strain ATCC BAA-1458 / RM4099 / 269.97).